A 450-amino-acid polypeptide reads, in one-letter code: Phosphoglucosamine mutase 2 (450 aa).

The active-site Phosphoserine intermediate is serine 101. Residues serine 101, aspartate 245, aspartate 247, and aspartate 249 each coordinate Mg(2+). Serine 101 carries the post-translational modification Phosphoserine.

It belongs to the phosphohexose mutase family. Mg(2+) serves as cofactor. In terms of processing, activated by phosphorylation.

The enzyme catalyses alpha-D-glucosamine 1-phosphate = D-glucosamine 6-phosphate. Catalyzes the conversion of glucosamine-6-phosphate to glucosamine-1-phosphate. This chain is Phosphoglucosamine mutase 2, found in Shewanella frigidimarina (strain NCIMB 400).